The primary structure comprises 132 residues: Ribosome-binding factor A (132 aa).

It belongs to the RbfA family. Monomer. Binds 30S ribosomal subunits, but not 50S ribosomal subunits or 70S ribosomes.

The protein localises to the cytoplasm. One of several proteins that assist in the late maturation steps of the functional core of the 30S ribosomal subunit. Associates with free 30S ribosomal subunits (but not with 30S subunits that are part of 70S ribosomes or polysomes). Required for efficient processing of 16S rRNA. May interact with the 5'-terminal helix region of 16S rRNA. The chain is Ribosome-binding factor A from Edwardsiella ictaluri (strain 93-146).